A 330-amino-acid chain; its full sequence is Aspartate--ammonia ligase (330 aa).

It belongs to the class-II aminoacyl-tRNA synthetase family. AsnA subfamily.

The protein resides in the cytoplasm. It catalyses the reaction L-aspartate + NH4(+) + ATP = L-asparagine + AMP + diphosphate + H(+). It participates in amino-acid biosynthesis; L-asparagine biosynthesis; L-asparagine from L-aspartate (ammonia route): step 1/1. This is Aspartate--ammonia ligase from Streptococcus thermophilus (strain CNRZ 1066).